A 152-amino-acid chain; its full sequence is 3-hydroxyacyl-[acyl-carrier-protein] dehydratase FabZ (152 aa).

His-58 is a catalytic residue.

It belongs to the thioester dehydratase family. FabZ subfamily.

It is found in the cytoplasm. The catalysed reaction is a (3R)-hydroxyacyl-[ACP] = a (2E)-enoyl-[ACP] + H2O. Functionally, involved in unsaturated fatty acids biosynthesis. Catalyzes the dehydration of short chain beta-hydroxyacyl-ACPs and long chain saturated and unsaturated beta-hydroxyacyl-ACPs. The protein is 3-hydroxyacyl-[acyl-carrier-protein] dehydratase FabZ of Prochlorococcus marinus subsp. pastoris (strain CCMP1986 / NIES-2087 / MED4).